We begin with the raw amino-acid sequence, 259 residues long: 3-deoxy-manno-octulosonate cytidylyltransferase (259 aa).

The protein belongs to the KdsB family.

The protein resides in the cytoplasm. It catalyses the reaction 3-deoxy-alpha-D-manno-oct-2-ulosonate + CTP = CMP-3-deoxy-beta-D-manno-octulosonate + diphosphate. It participates in nucleotide-sugar biosynthesis; CMP-3-deoxy-D-manno-octulosonate biosynthesis; CMP-3-deoxy-D-manno-octulosonate from 3-deoxy-D-manno-octulosonate and CTP: step 1/1. The protein operates within bacterial outer membrane biogenesis; lipopolysaccharide biosynthesis. In terms of biological role, activates KDO (a required 8-carbon sugar) for incorporation into bacterial lipopolysaccharide in Gram-negative bacteria. The polypeptide is 3-deoxy-manno-octulosonate cytidylyltransferase (Maricaulis maris (strain MCS10) (Caulobacter maris)).